The sequence spans 181 residues: Isopentenyl-diphosphate Delta-isomerase (181 aa).

The Mn(2+) site is built by His-25 and His-32. The Nudix hydrolase domain maps to Pro-30–Met-164. Cys-67 is a catalytic residue. A Mg(2+)-binding site is contributed by Cys-67. His-69 contacts Mn(2+). Glu-87 is a Mg(2+) binding site. Mn(2+)-binding residues include Glu-114 and Glu-116. Glu-116 is a catalytic residue.

It belongs to the IPP isomerase type 1 family. As to quaternary structure, homodimer. The cofactor is Mg(2+). Mn(2+) is required as a cofactor.

The protein localises to the cytoplasm. The catalysed reaction is isopentenyl diphosphate = dimethylallyl diphosphate. It participates in isoprenoid biosynthesis; dimethylallyl diphosphate biosynthesis; dimethylallyl diphosphate from isopentenyl diphosphate: step 1/1. Catalyzes the 1,3-allylic rearrangement of the homoallylic substrate isopentenyl (IPP) to its highly electrophilic allylic isomer, dimethylallyl diphosphate (DMAPP). The chain is Isopentenyl-diphosphate Delta-isomerase from Salmonella choleraesuis (strain SC-B67).